A 631-amino-acid chain; its full sequence is Altered inheritance of mitochondria protein 9, mitochondrial (631 aa).

A mitochondrion-targeting transit peptide spans 1 to 41; the sequence is MLSRVVRQRSRSAISSFKLRAHAAFAETRIGVGISVQATRL.

Belongs to the AIM9 family.

The protein localises to the mitochondrion. This Scheffersomyces stipitis (strain ATCC 58785 / CBS 6054 / NBRC 10063 / NRRL Y-11545) (Yeast) protein is Altered inheritance of mitochondria protein 9, mitochondrial (AIM9).